The following is a 218-amino-acid chain: Oocyte-specific homeobox protein 7 (218 aa).

Residues 40–72 (SPLVTPGSTMQSSLSVPERNLLQQESEGPSRQS) are compositionally biased toward polar residues. The tract at residues 40–77 (SPLVTPGSTMQSSLSVPERNLLQQESEGPSRQSGCMPL) is disordered. The segment at residues 94–153 (FRKERIVYSKEQQRLLQKHFDECQYPKEKKIVELAVLIGVTKMEIKKWFKNNRAKYRQMN) is a DNA-binding region (homeobox).

The protein belongs to the paired homeobox family. Obox subfamily. Specifically expressed in oocytes and early embryos.

It is found in the nucleus. Its function is as follows. Transcription factor required for zygotic genome activation (ZGA), a critical event in early embryonic development during which the developmental control passes from maternally provided mRNAs to the expression of the zygotic genome after fertilization. Together with other Obox family members, required in early two-cell stage embryos to kick-start the major ZGA wave by facilitating RNA Polymerase II 'pre-configuration', during which RNA Polymerase II relocates from the initial one-cell stage binding targets to ZGA gene promoters and distal enhancers. Mechanistically, promotes recruitment of RNA Polymerase II from (CG-rich) non-ZGA genes to (CG-poor) ZGA genes at the two-cell stage. Binds to regulatory DNA sequences containing a 5'-ACNCCTTTAATCCCAG-3' sequence motif. Most maternal and zygotic Obox family proteins can compensate for one another. The chain is Oocyte-specific homeobox protein 7 from Mus musculus (Mouse).